We begin with the raw amino-acid sequence, 263 residues long: 3-methyl-2-oxobutanoate hydroxymethyltransferase (263 aa).

Positions 45 and 84 each coordinate Mg(2+). 3-methyl-2-oxobutanoate contacts are provided by residues 45-46 (DS), aspartate 84, and lysine 112. Residue glutamate 114 participates in Mg(2+) binding. The Proton acceptor role is filled by glutamate 180.

The protein belongs to the PanB family. Homodecamer; pentamer of dimers. Requires Mg(2+) as cofactor.

The protein resides in the cytoplasm. It catalyses the reaction 3-methyl-2-oxobutanoate + (6R)-5,10-methylene-5,6,7,8-tetrahydrofolate + H2O = 2-dehydropantoate + (6S)-5,6,7,8-tetrahydrofolate. It functions in the pathway cofactor biosynthesis; (R)-pantothenate biosynthesis; (R)-pantoate from 3-methyl-2-oxobutanoate: step 1/2. Functionally, catalyzes the reversible reaction in which hydroxymethyl group from 5,10-methylenetetrahydrofolate is transferred onto alpha-ketoisovalerate to form ketopantoate. The sequence is that of 3-methyl-2-oxobutanoate hydroxymethyltransferase from Salmonella arizonae (strain ATCC BAA-731 / CDC346-86 / RSK2980).